The sequence spans 572 residues: Mitochondrial chaperone TCM62 (572 aa).

The N-terminal 16 residues, 1–16 (MLRNCLRKLGNHQTKC), are a transit peptide targeting the mitochondrion. The Mitochondrial matrix segment spans residues 17-471 (SVKTLHTPIY…KANEPNFMTK (455 aa)). Residues 472–488 (VGINAVLSAVILPSEVA) form a helical membrane-spanning segment. At 489–572 (FKNAYGYNYY…VYKKPERHKA (84 aa)) the chain is on the mitochondrial intermembrane side.

It belongs to the chaperonin (HSP60) family. Forms a high molecular mass protein complex of approximately 850 kDa.

The protein localises to the mitochondrion inner membrane. Functionally, chaperone. Required for the assembly of succinate dehydrogenase subunits. Ensures mitochondrial gene expression at elevated temperatures and prevents heat-aggregation of the ribosomal subunit VAR1. The polypeptide is Mitochondrial chaperone TCM62 (TCM62) (Saccharomyces cerevisiae (strain YJM789) (Baker's yeast)).